The chain runs to 364 residues: DNA replication and repair protein RecF (364 aa).

Position 30-37 (30-37) interacts with ATP; that stretch reads GNNGQGKT.

Belongs to the RecF family.

The protein resides in the cytoplasm. In terms of biological role, the RecF protein is involved in DNA metabolism; it is required for DNA replication and normal SOS inducibility. RecF binds preferentially to single-stranded, linear DNA. It also seems to bind ATP. In Geotalea daltonii (strain DSM 22248 / JCM 15807 / FRC-32) (Geobacter daltonii), this protein is DNA replication and repair protein RecF.